The sequence spans 124 residues: Putative outer membrane protein CT_569 (124 aa).

Positions 1–31 (MKKTKKRKQSITLVEMMVVITLIGIIGGALA) are cleaved as a signal peptide.

The protein localises to the cell outer membrane. The polypeptide is Putative outer membrane protein CT_569 (Chlamydia trachomatis serovar D (strain ATCC VR-885 / DSM 19411 / UW-3/Cx)).